Reading from the N-terminus, the 268-residue chain is Undecaprenyl-diphosphatase (268 aa).

Helical transmembrane passes span 41 to 61 (LAYS…LIYF), 81 to 101 (WLTY…PLYM), 106 to 126 (YLLL…AVIF), 146 to 166 (MTLG…LPGI), 191 to 211 (FVLV…SEGG), 213 to 233 (VATP…LVTI), and 245 to 265 (VTLV…TRIL).

Belongs to the UppP family.

It localises to the cell membrane. It carries out the reaction di-trans,octa-cis-undecaprenyl diphosphate + H2O = di-trans,octa-cis-undecaprenyl phosphate + phosphate + H(+). Its function is as follows. Catalyzes the dephosphorylation of undecaprenyl diphosphate (UPP). The protein is Undecaprenyl-diphosphatase of Pyrobaculum islandicum (strain DSM 4184 / JCM 9189 / GEO3).